A 367-amino-acid polypeptide reads, in one-letter code: 3-dehydroquinate synthase (367 aa).

NAD(+) contacts are provided by residues 69-74 (DGESHK), 103-107 (GVIGD), 127-128 (TT), Lys-140, Lys-149, and 167-170 (TLAT). Zn(2+)-binding residues include Glu-182, His-245, and His-262.

It belongs to the sugar phosphate cyclases superfamily. Dehydroquinate synthase family. Co(2+) serves as cofactor. Requires Zn(2+) as cofactor. NAD(+) is required as a cofactor.

Its subcellular location is the cytoplasm. The enzyme catalyses 7-phospho-2-dehydro-3-deoxy-D-arabino-heptonate = 3-dehydroquinate + phosphate. Its pathway is metabolic intermediate biosynthesis; chorismate biosynthesis; chorismate from D-erythrose 4-phosphate and phosphoenolpyruvate: step 2/7. Its function is as follows. Catalyzes the conversion of 3-deoxy-D-arabino-heptulosonate 7-phosphate (DAHP) to dehydroquinate (DHQ). The protein is 3-dehydroquinate synthase of Stutzerimonas stutzeri (strain A1501) (Pseudomonas stutzeri).